The chain runs to 132 residues: Spermatogenesis-associated protein 33 (132 aa).

Residues 1–60 are interaction with ATG16L1; sequence MGQSKSKPREKKEEEKSTTTLVTKSKEKVMEKEAKQSDKESQPAESLLFATSKHSRPSSS. Residues 1 to 81 form a disordered region; the sequence is MGQSKSKPRE…SKKRSVIPQI (81 aa). A compositionally biased stretch (basic and acidic residues) spans 24 to 42; it reads KSKEKVMEKEAKQSDKESQ. The interval 61–132 is interaction with VDAC2; that stretch reads SEDKPETKQR…IAAYDVHNTE (72 aa). The PQIIIT motif lies at 79-84; it reads PQIIIT. At S87 the chain carries Phosphoserine. The tract at residues 110 to 132 is disordered; sequence DWGPYHRHRSPSTIAAYDVHNTE.

Interacts (via PQIIIT motif) with PPP3R2 and PPP3CC. Interacts with VDAC2. Interacts with ATG16L1 (via WD repeats). Interacts with PPP3R1, PPP3CA and PPP3CB. Predominantly expressed in the testis (at protein level). Expressed in the sperm midpiece (at protein level).

It is found in the cytoplasm. The protein localises to the cytosol. It localises to the nucleus. Its subcellular location is the mitochondrion. Its function is as follows. Plays an important role in sperm motility and male fertility. Required for sperm midpiece flexibility and for the localization of sperm calcineurin to the mitochondria. Promotes mitophagy as well as acts as an autophagy mediator in male germline cells. Links damaged mitochondria to autophagosomes via its binding to the outer mitochondrial membrane protein VDAC2, as well as to key autophagy machinery component ATG16L1. The chain is Spermatogenesis-associated protein 33 (Spata33) from Mus musculus (Mouse).